A 651-amino-acid chain; its full sequence is J domain-containing protein required for chloroplast accumulation response 1 (651 aa).

Residues 1–17 (MQTLPSSETVLLGSNSA) are compositionally biased toward polar residues. Disordered regions lie at residues 1–56 (MQTL…TRHS), 114–138 (GSRILSPAHKPESSSGTSSPSQFSL), 156–176 (LNKNKETVSSSPLSRTSSKAD), 250–291 (KLGK…TDLK), and 308–526 (KPLD…IDEP). A Phosphoserine modification is found at S56. The span at 126–137 (SSSGTSSPSQFS) shows a compositional bias: low complexity. 6 stretches are compositionally biased toward basic and acidic residues: residues 250-259 (KLGKNEEGDG), 281-291 (TKEEKTETDLK), 337-357 (IFHEEDERQDEKIVSEREVRK), 405-416 (VGKDGVKGKVSD), 441-456 (RAKETPKTDIIHDGSN), and 488-497 (QKKDSDRESM). The stretch at 532–562 (DVEDITQDENKMEEANKDAEEIKNIDAKIRK) forms a coiled coil. In terms of domain architecture, J spans 586-651 (SGWKPVPLMD…WDHFNTLGPV (66 aa)).

Expressed in leaves and stems, but not in roots.

Its subcellular location is the cytoplasm. Its function is as follows. Required for chloroplast photorelocation movement; chloroplast accumulation upon low blue light and for chloroplast movement to the bottom of cells in darkness, by modulating chloroplast actin (Cp-actin) filaments distribution, appearance and disappearance. May mediate a slight resistance to aluminum in root hair cells. The polypeptide is J domain-containing protein required for chloroplast accumulation response 1 (JAC1) (Arabidopsis thaliana (Mouse-ear cress)).